Here is a 198-residue protein sequence, read N- to C-terminus: Probable GTP-binding protein EngB (198 aa).

An EngB-type G domain is found at 22 to 195 (NRNEVAFVGR…IDKLFLEFAT (174 aa)). GTP contacts are provided by residues 30–37 (GRSNVGKS), 57–61 (GKTRL), 75–78 (DLPG), 142–145 (TKSD), and 174–176 (YSS). Residues Ser-37 and Thr-59 each coordinate Mg(2+).

It belongs to the TRAFAC class TrmE-Era-EngA-EngB-Septin-like GTPase superfamily. EngB GTPase family. Requires Mg(2+) as cofactor.

In terms of biological role, necessary for normal cell division and for the maintenance of normal septation. The protein is Probable GTP-binding protein EngB of Clostridium botulinum (strain Alaska E43 / Type E3).